Reading from the N-terminus, the 286-residue chain is Ribosome-inactivating protein beta-momorcharin (286 aa).

A signal peptide spans methionine 1–glycine 23. Residue asparagine 74 is glycosylated (N-linked (GlcNAc...) asparagine). Residues tyrosine 93, tyrosine 132, glutamate 181, and arginine 184 contribute to the active site.

It belongs to the ribosome-inactivating protein family. Type 1 RIP subfamily. Post-translationally, bound to a branched hexasaccharide.

It catalyses the reaction Endohydrolysis of the N-glycosidic bond at one specific adenosine on the 28S rRNA.. In terms of biological role, irreversibly relaxes supercoiled DNA and catalyzes double-stranded breakage. Also acts as a ribosome inactivating protein. The sequence is that of Ribosome-inactivating protein beta-momorcharin (MAP30) from Momordica charantia (Bitter gourd).